The primary structure comprises 357 residues: Probable butyrate kinase 1 (357 aa).

Belongs to the acetokinase family.

It localises to the cytoplasm. The enzyme catalyses butanoate + ATP = butanoyl phosphate + ADP. The protein is Probable butyrate kinase 1 of Thermotoga maritima (strain ATCC 43589 / DSM 3109 / JCM 10099 / NBRC 100826 / MSB8).